Reading from the N-terminus, the 202-residue chain is uncharacterized protein (202 aa).

Residues 1–18 (MKNRLLILSLLVSVPAFA) form the signal peptide.

To E.coli YebB.

This is an uncharacterized protein from Escherichia coli (strain K12).